Consider the following 385-residue polypeptide: Cytochrome b (385 aa).

Topologically, residues 1–27 (MRLLKSHPLLKLVNSYLIDASQPSNIS) are mitochondrial matrix. Y16 is a binding site for a ubiquinone. A helical transmembrane segment spans residues 28–51 (YLWNFGSLLACCLIIQIVTGVTLA). Over 52-74 (MHYSPNVLEAFNSIEHIMRDVNN) the chain is Mitochondrial intermembrane. A helical membrane pass occupies residues 75–102 (GWLVRYLHSNTASAFFFLVYLHIGRGMY). Heme b is bound by residues H82 and H96. The Mitochondrial matrix segment spans residues 103-110 (YGSYRAPR). Residues 111 to 135 (TLVWAIGTVILILMMATAFLGYVLP) traverse the membrane as a helical segment. At 136–172 (YGQMSLWGATVITNLISAIPWIGQDIVEFIWGGFSVN) the chain is on the mitochondrial intermembrane side. Residues 173–205 (NATLNRFFALHFVLPFILAALVLMHLIALHDTA) form a helical membrane-spanning segment. Residues H183 and H197 each contribute to the heme b site. Position 202 (H202) interacts with a ubiquinone. The Mitochondrial matrix segment spans residues 206 to 224 (GSSNPLGVSGNYDRITFAP). The chain crosses the membrane as a helical span at residues 225–247 (YYLFKDLITIFIFIYVLSSFVFF). The Mitochondrial intermembrane segment spans residues 248–288 (MPNVLGDSENYIMANPMQTPPAIVPEWYLLPFYAILRSIPN). A helical transmembrane segment spans residues 289–309 (KLLGVIAMFSAILAIMLLPIT). The Mitochondrial matrix segment spans residues 310-320 (DLGRSKGLQFR). A helical transmembrane segment spans residues 321–341 (PLSKFAFWAFVVNFLILMKLG). The Mitochondrial intermembrane portion of the chain corresponds to 342–348 (ACHVESP). Residues 349–365 (FIELGQFSTIFYFSYFI) traverse the membrane as a helical segment. Residues 366 to 385 (FIVPVLSLIENTLVDLNYLK) are Mitochondrial matrix-facing.

It belongs to the cytochrome b family. In terms of assembly, component of the ubiquinol-cytochrome c oxidoreductase (cytochrome b-c1 complex, complex III, CIII), a multisubunit enzyme composed of 10 subunits. The complex is composed of 3 respiratory subunits cytochrome b (cob), cytochrome c1 (cyt-1) and Rieske protein (fes-1), 2 core protein subunits pep and ucr-1, and 5 low-molecular weight protein subunits qcr6, qcr7, qcr8, qcr9 and probably NCU16844/qcr10. The complex exists as an obligatory dimer and forms supercomplexes (SCs) in the inner mitochondrial membrane with NADH-ubiquinone oxidoreductase (complex I, CI) and cytochrome c oxidase (complex IV, CIV), resulting in different assemblies (supercomplexes SCI(1)III(2), SCIII(2)IV(1) and SCIII(2)IV(2) as well as higher order I(x)III(y)IV(z) megacomplexes). Heme b serves as cofactor.

It localises to the mitochondrion inner membrane. The catalysed reaction is a quinol + 2 Fe(III)-[cytochrome c](out) = a quinone + 2 Fe(II)-[cytochrome c](out) + 2 H(+)(out). Component of the ubiquinol-cytochrome c oxidoreductase, a multisubunit transmembrane complex that is part of the mitochondrial electron transport chain which drives oxidative phosphorylation. The respiratory chain contains 3 multisubunit complexes succinate dehydrogenase (complex II, CII), ubiquinol-cytochrome c oxidoreductase (cytochrome b-c1 complex, complex III, CIII) and cytochrome c oxidase (complex IV, CIV), that cooperate to transfer electrons derived from NADH and succinate to molecular oxygen, creating an electrochemical gradient over the inner membrane that drives transmembrane transport and the ATP synthase. The cytochrome b-c1 complex catalyzes electron transfer from ubiquinol to cytochrome c, linking this redox reaction to translocation of protons across the mitochondrial inner membrane, with protons being carried across the membrane as hydrogens on the quinol. In the process called Q cycle, 2 protons are consumed from the matrix, 4 protons are released into the intermembrane space and 2 electrons are passed to cytochrome c. Cytochrome b is a catalytic core subunit containing 2 b-type hemes BL and BH topographically segregated in the quinone reduction (Qi) and quinol oxidation (Q0) sites on opposite sides of the membrane. The protein is Cytochrome b (cob) of Neurospora crassa (strain ATCC 24698 / 74-OR23-1A / CBS 708.71 / DSM 1257 / FGSC 987).